A 568-amino-acid polypeptide reads, in one-letter code: ATP-dependent RNA helicase MRH4, mitochondrial (568 aa).

The N-terminal 50 residues, Met-1–Ala-50, are a transit peptide targeting the mitochondrion. The segment covering Ser-36–Arg-49 has biased composition (polar residues). Positions Ser-36–Leu-64 are disordered. The short motif at Glu-143 to Gln-150 is the Q motif element. A Helicase ATP-binding domain is found at Asn-160–Leu-348. Ala-173–Thr-180 lines the ATP pocket. Residues Asp-296–Asp-299 carry the DEAD box motif. A Helicase C-terminal domain is found at Ala-379–Thr-568.

The protein belongs to the DEAD box helicase family. MRH4 subfamily.

Its subcellular location is the mitochondrion. It catalyses the reaction ATP + H2O = ADP + phosphate + H(+). ATP-binding RNA helicase involved in mitochondrial RNA metabolism. Required for maintenance of mitochondrial DNA. This Candida glabrata (strain ATCC 2001 / BCRC 20586 / JCM 3761 / NBRC 0622 / NRRL Y-65 / CBS 138) (Yeast) protein is ATP-dependent RNA helicase MRH4, mitochondrial (MRH4).